The following is a 206-amino-acid chain: Thymidylate kinase (206 aa).

11–18 (GIDGAGKT) is an ATP binding site.

The protein belongs to the thymidylate kinase family.

It catalyses the reaction dTMP + ATP = dTDP + ADP. In terms of biological role, phosphorylation of dTMP to form dTDP in both de novo and salvage pathways of dTTP synthesis. The polypeptide is Thymidylate kinase (Burkholderia cenocepacia (strain ATCC BAA-245 / DSM 16553 / LMG 16656 / NCTC 13227 / J2315 / CF5610) (Burkholderia cepacia (strain J2315))).